Reading from the N-terminus, the 1216-residue chain is SPOC domain-containing protein 1 (1216 aa).

Disordered stretches follow at residues 1-74, 166-216, 236-325, 348-462, and 511-601; these read MSQA…RAAG, EARD…GAHS, NLLS…PPQS, RTGS…PRLE, and SSPS…QQEK. Residues 36-50 are compositionally biased toward low complexity; it reads PGLSPDGPGASSGPG. Residues 177-190 are compositionally biased toward basic and acidic residues; that stretch reads CDRRSPTLSKEEPP. Residues 204–213 are compositionally biased toward basic residues; it reads RVRKKWRRQG. Residues 266 to 278 show a composition bias toward gly residues; that stretch reads SGPGEPGGSGAGC. Over residues 314–325 the composition is skewed to low complexity; it reads SLSSAAQAPPQS. Residues 436-452 show a composition bias toward basic and acidic residues; the sequence is RGTDRSSDNSHQDRPEE. The segment covering 581-592 has biased composition (acidic residues); the sequence is EAEEDSLPEQPE. Positions 608 to 728 constitute a TFIIS central domain; it reads VRGTVVRSMQ…IIEQQQKEPC (121 aa). The tract at residues 823–850 is disordered; sequence QTPMPAPEMPKTRELSPTEPQDRVPPSG. Residues 832-844 show a composition bias toward basic and acidic residues; it reads PKTRELSPTEPQD. The SPOC domain occupies 867 to 970; the sequence is WEGVLDMFSI…VEHMGMVLLP (104 aa). Residues 1046 to 1055 show a composition bias toward basic and acidic residues; that stretch reads RYYQPDDRRP. Disordered regions lie at residues 1046 to 1140 and 1176 to 1216; these read RYYQ…QHFH and PRPL…PRKA.

Interacts with DNMT3A, DNMT3C and DNMT3L. Interacts with C19orf84. Interacts with SPIN1; promoting recruitment to transposons marked with histone H3 trimethylated at both 'Lys-4' and 'Lys-9' (H3K4me3K9me3).

It localises to the nucleus. The protein resides in the chromosome. Protein adapter that acts as an essential executor of PIWIL4-piRNA pathway directed transposon DNA methylation and silencing in the male embryonic germ cells. Recruited to young transposons, which are specifically marked with histone H3 trimethylated at both 'Lys-4' and 'Lys-9' (H3K4me3K9me3), via its association with SPIN1 chromatin reader, and associates with the de novo DNA methylation machinery and repressive chromatin remodeling complexes. Following this, PIWIL4 engages with nascent transposable element transcript to direct piRNA-directed DNA methylation. Not required for piRNA biosynthesis. In Homo sapiens (Human), this protein is SPOC domain-containing protein 1.